The primary structure comprises 354 residues: S-adenosylmethionine:tRNA ribosyltransferase-isomerase (354 aa).

Belongs to the QueA family. In terms of assembly, monomer.

The protein localises to the cytoplasm. The catalysed reaction is 7-aminomethyl-7-carbaguanosine(34) in tRNA + S-adenosyl-L-methionine = epoxyqueuosine(34) in tRNA + adenine + L-methionine + 2 H(+). It participates in tRNA modification; tRNA-queuosine biosynthesis. Its function is as follows. Transfers and isomerizes the ribose moiety from AdoMet to the 7-aminomethyl group of 7-deazaguanine (preQ1-tRNA) to give epoxyqueuosine (oQ-tRNA). The chain is S-adenosylmethionine:tRNA ribosyltransferase-isomerase from Azorhizobium caulinodans (strain ATCC 43989 / DSM 5975 / JCM 20966 / LMG 6465 / NBRC 14845 / NCIMB 13405 / ORS 571).